We begin with the raw amino-acid sequence, 221 residues long: Adenylate kinase (221 aa).

Residue 10–15 (GAGKGT) coordinates ATP. The tract at residues 30 to 59 (STGDMLRAAVKAGTPLGLEAKRFMDAGELV) is NMP. Residues T31, R36, 57–59 (ELV), 85–88 (GFPR), and Q92 contribute to the AMP site. The interval 122 to 159 (GRRSHAASGRTYHVKFNPPKVEGLDDVTGEPLIQRDDD) is LID. Residues R123 and 132 to 133 (TY) each bind ATP. The AMP site is built by R156 and R167. G207 contacts ATP.

The protein belongs to the adenylate kinase family. As to quaternary structure, monomer.

It is found in the cytoplasm. The catalysed reaction is AMP + ATP = 2 ADP. It participates in purine metabolism; AMP biosynthesis via salvage pathway; AMP from ADP: step 1/1. Catalyzes the reversible transfer of the terminal phosphate group between ATP and AMP. Plays an important role in cellular energy homeostasis and in adenine nucleotide metabolism. The polypeptide is Adenylate kinase (Paraburkholderia xenovorans (strain LB400)).